A 424-amino-acid polypeptide reads, in one-letter code: Glutamyl-tRNA reductase (424 aa).

Substrate-binding positions include 49–52 (TCNR), Ser-108, 113–115 (EPQ), and Gln-119. Catalysis depends on Cys-50, which acts as the Nucleophile. Residue 188 to 193 (GAGETI) coordinates NADP(+).

This sequence belongs to the glutamyl-tRNA reductase family. Homodimer.

It catalyses the reaction (S)-4-amino-5-oxopentanoate + tRNA(Glu) + NADP(+) = L-glutamyl-tRNA(Glu) + NADPH + H(+). It functions in the pathway porphyrin-containing compound metabolism; protoporphyrin-IX biosynthesis; 5-aminolevulinate from L-glutamyl-tRNA(Glu): step 1/2. Catalyzes the NADPH-dependent reduction of glutamyl-tRNA(Glu) to glutamate 1-semialdehyde (GSA). This Hahella chejuensis (strain KCTC 2396) protein is Glutamyl-tRNA reductase.